The sequence spans 232 residues: MTTMKNRSQDDMVTGTLPKLKSSKEWLEPQSLSFMEALAKEDTDAAVQSILYRENYIMKELDKYLHHQDFLNTRRKEMLYKKWVERVADPLQKKIIEKVHSHKNIKKRRRQELDNFLKHSNKKGNAFIEHYDPKEYDPFYMSKEDPNFLKVIMPPFRDPLKKAQYDQDDEKRTLLQCETGKIYTMKEFKEIEKAQLHSRFPSISNSRQSMTPNGWLKVPMSYIESEFCKKSR.

This sequence belongs to the FAM228 family.

The polypeptide is Protein FAM228B (Fam228b) (Mus musculus (Mouse)).